The chain runs to 45 residues: Major cold shock protein (45 aa).

Positions 1–45 (EKGFGFISTENGQDVFAHFSAIQTNGFKTLEEGQKVEFDVEEGQR) constitute a CSD domain.

In terms of assembly, homodimer.

Its subcellular location is the cytoplasm. In Streptococcus dysgalactiae, this protein is Major cold shock protein (cspA).